An 861-amino-acid polypeptide reads, in one-letter code: Semaphorin-4D (861 aa).

A signal peptide spans 1-23; the sequence is MRMCAPVRGLFLALVVVLRTAVA. Positions 24-500 constitute a Sema domain; that stretch reads FAPVPRLTWE…SNSGVVQAPL (477 aa). The Extracellular segment spans residues 24–733; that stretch reads FAPVPRLTWE…TVYLKSSDNR (710 aa). 2 N-linked (GlcNAc...) asparagine glycosylation sites follow: Asn49 and Asn77. Intrachain disulfides connect Cys97/Cys108 and Cys126/Cys135. N-linked (GlcNAc...) asparagine glycosylation is found at Asn139 and Asn191. Intrachain disulfides connect Cys257/Cys370 and Cys281/Cys326. N-linked (GlcNAc...) asparagine glycans are attached at residues Asn379 and Asn419. One can recognise a PSI domain in the interval 502–551; sequence FCEKHGSCEDCVLARDPYCAWSPAIKACVTLHQEEASSRGWIQDMSGDTS. 4 disulfides stabilise this stretch: Cys503/Cys520, Cys509/Cys553, Cys512/Cys529, and Cys576/Cys624. One can recognise an Ig-like C2-type domain in the interval 555–636; it reads DKSKESFNQH…EERVRNKTVS (82 aa). N-linked (GlcNAc...) asparagine glycosylation is found at Asn613 and Asn632. The tract at residues 649–709 is disordered; it reads VPRTPPSPTS…KSSSGTSCEP (61 aa). Polar residues predominate over residues 657–681; that stretch reads TSEDAQTEGSKITSKMPVASTQGSS. Residues 734-754 traverse the membrane as a helical segment; that stretch reads LLMSLLLFIFVLFLCLFSYNC. Over 755-861 the chain is Cytoplasmic; it reads YKGYLPGQCL…KFADSDADGD (107 aa). Residues Ser782 and Ser832 each carry the phosphoserine modification. The interval 793–839 is disordered; that stretch reads VEPGSFSQQNGDHPKPALDTGYETEQDTITSKVPTDREDSQRIDELS. The segment covering 826–839 has biased composition (basic and acidic residues); it reads PTDREDSQRIDELS.

It belongs to the semaphorin family. In terms of assembly, homodimer. Interacts with PLXNB1. Interacts with PLXNB2. As to expression, strongly expressed in lymphoid tissues, especially in the thymus, as well as in the nervous tissues. Expressed in neurons and glia in the developing hippocampus.

The protein localises to the cell membrane. Functionally, cell surface receptor for PLXNB1 and PLXNB2 that plays an important role in cell-cell signaling. Regulates GABAergic synapse development. Promotes the development of inhibitory synapses in a PLXNB1-dependent manner. Modulates the complexity and arborization of developing neurites in hippocampal neurons by activating PLXNB1 and interaction with PLXNB1 mediates activation of RHOA. Promotes the migration of cerebellar granule cells. Plays a role in the immune system; induces B-cells to aggregate and improves their viability (in vitro). Induces endothelial cell migration through the activation of PTK2B/PYK2, SRC, and the phosphatidylinositol 3-kinase-AKT pathway. This is Semaphorin-4D (Sema4d) from Mus musculus (Mouse).